The following is a 387-amino-acid chain: Guanylate kinase 1 (387 aa).

Positions 137–319 (EKPIVISGPS…CYKKLKNLLG (183 aa)) constitute a Guanylate kinase-like domain. 144 to 151 (GPSGVGKG) provides a ligand contact to ATP. Active-site residues include R177, R270, and R281. 2 residues coordinate ATP: N304 and D305.

It belongs to the guanylate kinase family. Monomer.

The enzyme catalyses GMP + ATP = GDP + ADP. Its function is as follows. Essential for recycling GMP and indirectly, cGMP. Required for normal development of the gametophyte and embryo, in association with GK2. This is Guanylate kinase 1 (GK-1) from Arabidopsis thaliana (Mouse-ear cress).